Reading from the N-terminus, the 678-residue chain is Zinc finger translocation-associated protein (678 aa).

Disordered regions lie at residues Met1–Asp100, Leu182–Gly250, Gln329–His417, and Leu490–Pro583. Residues Ser62–Arg78 show a composition bias toward low complexity. The span at Lys79–Ala88 shows a compositional bias: basic and acidic residues. Residues Ala187–Gly201 show a composition bias toward acidic residues. Residue Lys375 forms a Glycyl lysine isopeptide (Lys-Gly) (interchain with G-Cter in SUMO2) linkage. Residues Ala388–Glu398 are compositionally biased toward acidic residues. Positions Pro492–Pro504 are enriched in pro residues. Composition is skewed to acidic residues over residues Gly513–Gly529 and Ala543–Gln553. The segment covering Leu560–Pro572 has biased composition (pro residues). The span at Arg573 to Pro583 shows a compositional bias: basic and acidic residues.

The sequence is that of Zinc finger translocation-associated protein from Homo sapiens (Human).